Here is a 331-residue protein sequence, read N- to C-terminus: Ketol-acid reductoisomerase (NADP(+)) (331 aa).

Residues 2–182 enclose the KARI N-terminal Rossmann domain; that stretch reads AKMYYDKDAD…GGTRAGVIET (181 aa). Residues 25 to 28, Ser-51, Ser-53, and 83 to 86 contribute to the NADP(+) site; these read FGSQ and DEKQ. His-108 is a catalytic residue. An NADP(+)-binding site is contributed by Gly-134. In terms of domain architecture, KARI C-terminal knotted spans 183–328; sequence TFKEETETDL…KGLREMMAWI (146 aa). Mg(2+) is bound by residues Asp-191, Glu-195, Glu-227, and Glu-231. Substrate is bound at residue Ser-252.

Belongs to the ketol-acid reductoisomerase family. Mg(2+) is required as a cofactor.

The catalysed reaction is (2R)-2,3-dihydroxy-3-methylbutanoate + NADP(+) = (2S)-2-acetolactate + NADPH + H(+). The enzyme catalyses (2R,3R)-2,3-dihydroxy-3-methylpentanoate + NADP(+) = (S)-2-ethyl-2-hydroxy-3-oxobutanoate + NADPH + H(+). The protein operates within amino-acid biosynthesis; L-isoleucine biosynthesis; L-isoleucine from 2-oxobutanoate: step 2/4. It participates in amino-acid biosynthesis; L-valine biosynthesis; L-valine from pyruvate: step 2/4. In terms of biological role, involved in the biosynthesis of branched-chain amino acids (BCAA). Catalyzes an alkyl-migration followed by a ketol-acid reduction of (S)-2-acetolactate (S2AL) to yield (R)-2,3-dihydroxy-isovalerate. In the isomerase reaction, S2AL is rearranged via a Mg-dependent methyl migration to produce 3-hydroxy-3-methyl-2-ketobutyrate (HMKB). In the reductase reaction, this 2-ketoacid undergoes a metal-dependent reduction by NADPH to yield (R)-2,3-dihydroxy-isovalerate. This chain is Ketol-acid reductoisomerase (NADP(+)), found in Thermoanaerobacter pseudethanolicus (strain ATCC 33223 / 39E) (Clostridium thermohydrosulfuricum).